Consider the following 102-residue polypeptide: Small ribosomal subunit protein uS10 (102 aa).

This sequence belongs to the universal ribosomal protein uS10 family. Part of the 30S ribosomal subunit.

Involved in the binding of tRNA to the ribosomes. This Geobacter sulfurreducens (strain ATCC 51573 / DSM 12127 / PCA) protein is Small ribosomal subunit protein uS10.